We begin with the raw amino-acid sequence, 613 residues long: Glucose-6-phosphate isomerase 1, chloroplastic (613 aa).

Residues 1 to 14 (MASLSGLYSSSPSL) are compositionally biased toward low complexity. Positions 1 to 21 (MASLSGLYSSSPSLKPAKNHS) are disordered. The N-terminal 48 residues, 1–48 (MASLSGLYSSSPSLKPAKNHSFKALPAQSRDSFSFPHTSKPTNLPLTL), are a transit peptide targeting the chloroplast. The Proton donor role is filled by E392. Active-site residues include H421 and K526. S595 bears the Phosphoserine mark.

The protein belongs to the GPI family.

It is found in the plastid. Its subcellular location is the chloroplast stroma. It carries out the reaction alpha-D-glucose 6-phosphate = beta-D-fructose 6-phosphate. It functions in the pathway carbohydrate degradation; glycolysis; D-glyceraldehyde 3-phosphate and glycerone phosphate from D-glucose: step 2/4. The protein operates within carbohydrate biosynthesis; gluconeogenesis. Inhibited by glycerol-3-P (G3P). Its function is as follows. Promotes the synthesis of starch in leaves. In Arabidopsis thaliana (Mouse-ear cress), this protein is Glucose-6-phosphate isomerase 1, chloroplastic (PGI1).